A 114-amino-acid chain; its full sequence is Cuticle protein CP1158 (114 aa).

Gln1 carries the pyrrolidone carboxylic acid modification. 4 repeat units span residues 1–17, 26–43, 70–87, and 95–112.

Calcified shell.

This chain is Cuticle protein CP1158, found in Cancer pagurus (Rock crab).